We begin with the raw amino-acid sequence, 480 residues long: ATP synthase subunit beta (480 aa).

153–160 (GGAGVGKT) provides a ligand contact to ATP.

The protein belongs to the ATPase alpha/beta chains family. F-type ATPases have 2 components, CF(1) - the catalytic core - and CF(0) - the membrane proton channel. CF(1) has five subunits: alpha(3), beta(3), gamma(1), delta(1), epsilon(1). CF(0) has three main subunits: a(1), b(2) and c(9-12). The alpha and beta chains form an alternating ring which encloses part of the gamma chain. CF(1) is attached to CF(0) by a central stalk formed by the gamma and epsilon chains, while a peripheral stalk is formed by the delta and b chains.

It is found in the cell membrane. It carries out the reaction ATP + H2O + 4 H(+)(in) = ADP + phosphate + 5 H(+)(out). Produces ATP from ADP in the presence of a proton gradient across the membrane. The catalytic sites are hosted primarily by the beta subunits. This chain is ATP synthase subunit beta, found in Lactobacillus johnsonii (strain CNCM I-12250 / La1 / NCC 533).